Here is a 281-residue protein sequence, read N- to C-terminus: Transcription factor HES-1 (281 aa).

Residues 1 to 44 form a disordered region; the sequence is MPADIMEKNSSSPVAATPASVNTTPDKPKTASEHRKSSKPIMEK. The span at 10–21 shows a compositional bias: low complexity; it reads SSSPVAATPASV. The segment covering 26 to 35 has biased composition (basic and acidic residues); it reads DKPKTASEHR. The 58-residue stretch at 34 to 91 folds into the bHLH domain; the sequence is HRKSSKPIMEKRRRARINESLSQLKTLILDALKKDSSRHSKLEKADILEMTVKHLRNL. One can recognise an Orange domain in the interval 110–143; sequence YRAGFSECMNEVTRFLSTCEGVNTEVRTRLLGHL. 2 disordered regions span residues 158–206 and 255–281; these read QAHP…PCKL and TSVGPNAVSPSSGSSLTADSMWRPWRN. 2 stretches are compositionally biased toward pro residues: residues 164-174 and 182-201; these read QAPPPPPPSGP and FAPPPPLVPIPGGAAPPPGS. The segment covering 255–272 has biased composition (polar residues); the sequence is TSVGPNAVSPSSGSSLTA. Residues 276–279 carry the WRPW motif motif; that stretch reads WRPW.

Interacts with SIRT1. Interacts weakly with TLE2. Interacts with HES6. Transcription repression requires formation of a complex with a corepressor protein of the Groucho/TLE family. Interacts (via WPRW motif) with TLE1. Interacts with an FA complex, composed of FANCA, FANCF, FANCG and FANCL, but not of FANCC, nor FANCE. In terms of tissue distribution, present in all tissues examined but highest in epithelial cells and in mesoderm-derived tissues such as embryonal muscle cells.

The protein resides in the nucleus. Its function is as follows. Transcriptional repressor of genes that require a bHLH protein for their transcription. May act as a negative regulator of myogenesis by inhibiting the functions of MYOD1 and ASH1. Binds DNA on N-box motifs: 5'-CACNAG-3' with high affinity and on E-box motifs: 5'-CANNTG-3' with low affinity. May play a role in a functional FA core complex response to DNA cross-link damage, being required for the stability and nuclear localization of FA core complex proteins, as well as for FANCD2 monoubiquitination in response to DNA damage. The chain is Transcription factor HES-1 (Hes1) from Rattus norvegicus (Rat).